The sequence spans 156 residues: Large ribosomal subunit protein uL15 (156 aa).

The span at 1–13 shows a compositional bias: basic and acidic residues; it reads MKLNEIKDNEGAT. The segment at 1 to 39 is disordered; that stretch reads MKLNEIKDNEGATKNRKRLGRGIGSGSGKTAGRGVKGQK. Over residues 21–35 the composition is skewed to gly residues; it reads RGIGSGSGKTAGRGV.

It belongs to the universal ribosomal protein uL15 family. In terms of assembly, part of the 50S ribosomal subunit.

In terms of biological role, binds to the 23S rRNA. This Rhizobium meliloti (strain 1021) (Ensifer meliloti) protein is Large ribosomal subunit protein uL15.